The primary structure comprises 251 residues: tRNA (guanine-N(1)-)-methyltransferase (251 aa).

Residues Gly-113 and 133 to 138 (IGDYVL) contribute to the S-adenosyl-L-methionine site.

Belongs to the RNA methyltransferase TrmD family. As to quaternary structure, homodimer.

The protein localises to the cytoplasm. It catalyses the reaction guanosine(37) in tRNA + S-adenosyl-L-methionine = N(1)-methylguanosine(37) in tRNA + S-adenosyl-L-homocysteine + H(+). Specifically methylates guanosine-37 in various tRNAs. This Methylococcus capsulatus (strain ATCC 33009 / NCIMB 11132 / Bath) protein is tRNA (guanine-N(1)-)-methyltransferase.